The chain runs to 660 residues: DNA polymerase alpha-associated DNA helicase A (660 aa).

Residue 232–239 (GPPGTGKT) coordinates ATP.

It belongs to the DNA2/NAM7 helicase family. As to quaternary structure, associates with the hexameric DNA polymerase alpha.

It is found in the cytoplasm. It localises to the nucleus. The catalysed reaction is ATP + H2O = ADP + phosphate + H(+). Functionally, DNA polymerase alpha-associated DNA helicase which may be involved in DNA replication. The sequence is that of DNA polymerase alpha-associated DNA helicase A (hcs1) from Schizosaccharomyces pombe (strain 972 / ATCC 24843) (Fission yeast).